The following is a 148-amino-acid chain: uncharacterized protein (148 aa).

2 consecutive transmembrane segments (helical) span residues isoleucine 16–leucine 36 and leucine 41–phenylalanine 61.

The protein to M.jannaschii MJ0696.

It localises to the cell membrane. This is an uncharacterized protein from Methanocaldococcus jannaschii (strain ATCC 43067 / DSM 2661 / JAL-1 / JCM 10045 / NBRC 100440) (Methanococcus jannaschii).